The primary structure comprises 184 residues: Peptidyl-tRNA hydrolase (184 aa).

Residue Tyr-14 participates in tRNA binding. The active-site Proton acceptor is the His-19. Positions 64, 66, and 112 each coordinate tRNA.

It belongs to the PTH family. As to quaternary structure, monomer.

It is found in the cytoplasm. The catalysed reaction is an N-acyl-L-alpha-aminoacyl-tRNA + H2O = an N-acyl-L-amino acid + a tRNA + H(+). In terms of biological role, hydrolyzes ribosome-free peptidyl-tRNAs (with 1 or more amino acids incorporated), which drop off the ribosome during protein synthesis, or as a result of ribosome stalling. Its function is as follows. Catalyzes the release of premature peptidyl moieties from peptidyl-tRNA molecules trapped in stalled 50S ribosomal subunits, and thus maintains levels of free tRNAs and 50S ribosomes. The sequence is that of Peptidyl-tRNA hydrolase from Thermoanaerobacter sp. (strain X514).